The primary structure comprises 571 residues: Adenine deaminase (571 aa).

It belongs to the metallo-dependent hydrolases superfamily. Adenine deaminase family. The cofactor is Mn(2+).

It catalyses the reaction adenine + H2O + H(+) = hypoxanthine + NH4(+). This is Adenine deaminase from Dehalococcoides mccartyi (strain ATCC BAA-2100 / JCM 16839 / KCTC 5957 / BAV1).